Reading from the N-terminus, the 101-residue chain is Replication restart protein PriB (101 aa).

Positions 1-101 (MATNHLVLSG…LHAENVELKT (101 aa)) constitute an SSB domain.

This sequence belongs to the PriB family. In terms of assembly, homodimer. Interacts with PriA and DnaT. Component of the replication restart primosome. Primosome assembly occurs via a 'hand-off' mechanism. PriA binds to replication forks, subsequently PriB then DnaT bind; DnaT then displaces ssDNA to generate the helicase loading substrate.

Functionally, involved in the restart of stalled replication forks, which reloads the replicative helicase on sites other than the origin of replication; the PriA-PriB pathway is the major replication restart pathway. During primosome assembly it facilitates complex formation between PriA and DnaT on DNA; stabilizes PriA on DNA. Stimulates the DNA unwinding activity of PriA helicase. The chain is Replication restart protein PriB from Shewanella sediminis (strain HAW-EB3).